We begin with the raw amino-acid sequence, 388 residues long: uncharacterized protein (388 aa).

The protein belongs to the glycosyltransferase 28 family.

This is an uncharacterized protein from Methanosarcina acetivorans (strain ATCC 35395 / DSM 2834 / JCM 12185 / C2A).